Consider the following 894-residue polypeptide: Transcriptional activator/repressor GIS1 (894 aa).

The region spanning 12–53 (VPVFKPSMMEFANFQYFIDEITKFGIENGIVKVIPPKEWLEL) is the JmjN domain. Position 70 is a phosphoserine (S70). The stretch at 90–110 (ENEYDNKSYNLTQWKNLAESL) forms a coiled coil. The 155-residue stretch at 170–324 (PYDLTLWNLN…VRKQPLKCGC (155 aa)) folds into the JmjC domain. Positions 316 to 332 (RKQPLKCGCGNKKEERK) match the Bipartite nuclear localization signal motif. Residues 324–355 (CGNKKEERKSGPFSNLSYDSNESEQRGSITDN) are disordered. Over residues 335–354 (PFSNLSYDSNESEQRGSITD) the composition is skewed to polar residues. Phosphoserine is present on S343. Residues 361 to 385 (QKVRSFDELLNHSSQELQNLEDNKN) are a coiled coil. Residues 521-554 (NISSTNNSANNSSSNNNVSTVPSSMMHSSTLNGT) show a composition bias toward low complexity. The disordered stretch occupies residues 521–558 (NISSTNNSANNSSSNNNVSTVPSSMMHSSTLNGTSGLG). 5 positions are modified to phosphoserine: S690, S694, S696, S734, and S747. Residues 756–768 (LNGNDNSNLDSNN) show a composition bias toward low complexity. Residues 756–810 (LNGNDNSNLDSNNFDYSFTGNKQESNPSILNNNTNNNDNYRTSSMNNNGNNYQAH) form a disordered region. Composition is skewed to polar residues over residues 769–785 (FDYSFTGNKQESNPSIL) and 795–810 (YRTSSMNNNGNNYQAH). The segment at 828 to 851 (YICRECNRQFSSGHHLTRHKKSVH) adopts a C2H2-type 1 zinc-finger fold. The segment at 857–882 (HSCPRCGKRFKRRDHVLQHLNKKIPC) adopts a C2H2-type 2; atypical zinc-finger fold.

It is found in the nucleus. Transcription factor involved in the regulation of gene expression upon nutrient starvation. Recognizes and binds to the post-diauxic-shift element 5'-T[AT]AGGGAT-3' in the promoter region. Can act as a transcriptional activator (e.g. of stress genes like SSA3, HSP12 and HSP26) as well as a repressor (e.g. of pyrophosphate phosphatase DPP1). GIS1 also acts as a DNA damage-responsive transcriptional repressor of photolyase PHR1. The polypeptide is Transcriptional activator/repressor GIS1 (GIS1) (Saccharomyces cerevisiae (strain ATCC 204508 / S288c) (Baker's yeast)).